A 173-amino-acid polypeptide reads, in one-letter code: Putative metal-dependent hydrolase BA_2700/GBAA_2700/BAS2515 (173 aa).

Zn(2+) is bound by residues His65, His156, and His160.

It belongs to the metal hydrolase YfiT family. As to quaternary structure, homodimer. The cofactor is Zn(2+).

The protein resides in the cytoplasm. Its function is as follows. Possible metal-dependent hydrolase. The polypeptide is Putative metal-dependent hydrolase BA_2700/GBAA_2700/BAS2515 (Bacillus anthracis).